Reading from the N-terminus, the 456-residue chain is Bestrophin homolog 18 (456 aa).

4 helical membrane-spanning segments follow: residues 29-49 (WSAI…VSAI), 83-103 (GFFI…IGFI), 234-254 (IIYP…GILA), and 267-287 (MIDL…MGWL). A disordered region spans residues 416 to 456 (ASSSRSLERQRSPGSFRMETLTPGSPTNTPIEPIDKIDKKK).

It belongs to the anion channel-forming bestrophin (TC 1.A.46) family. Calcium-sensitive chloride channel subfamily. Forms oligomers.

The protein resides in the cell membrane. Functionally, forms chloride channels. This chain is Bestrophin homolog 18 (best-18), found in Caenorhabditis elegans.